Here is a 176-residue protein sequence, read N- to C-terminus: Secreted LysM effector ELP2 (176 aa).

The signal sequence occupies residues 1-18; that stretch reads MQFSIFTVLAAAASFAVA. Positions 31 to 45 are enriched in low complexity; that stretch reads TSAAANPSPTTSGAA. A disordered region spans residues 31–50; the sequence is TSAAANPSPTTSGAANPSPT. The region spanning 58–102 is the LysM 1 domain; it reads HKTTVKAGQTLTTIAERFHSGICDIAWQNKLENPNVIFVGQVLLV. N111 is a glycosylation site (N-linked (GlcNAc...) asparagine). The region spanning 129-173 is the LysM 2 domain; it reads ATYTIKSGDTFFAVAQSLGITTDSLTGANPGVVPENLQIDQVINV.

It belongs to the secreted LysM effector family. Forms homodimers in a chitin-independent manner through interactions at the N-termini of EPL2 monomers. Homodimers are further polymerized in a chitin-dependent manner.

It localises to the secreted. Functionally, secreted effector that enables the plant pathogenic fungus to manipulate host defenses for successful infection. Binds chitin oligomers and polymer with high affinity and plays a dual role, not only in the suppression of chitin-triggered immune responses, but also in appressorium function. Does not protect fungal hyphae against plant chitinases but suppresses chitin-triggered plant immune responses. Chitin-induced polymerization of homodimers forms a contiguous ELP2 highly oligomeric super-complexe that may precipitate at infection sites to eliminate chitin oligomers, and thus suppress the activation of chitin-induced plant immunity. This is Secreted LysM effector ELP2 from Colletotrichum higginsianum (strain IMI 349063) (Crucifer anthracnose fungus).